A 255-amino-acid chain; its full sequence is uncharacterized protein (255 aa).

The first 23 residues, 1–23 (MKRLNKLVLYISFLILVISFTAG), serve as a signal peptide directing secretion. Cys-24 carries N-palmitoyl cysteine lipidation. A lipid anchor (S-diacylglycerol cysteine) is attached at Cys-24.

This sequence belongs to the staphylococcal tandem lipoprotein family.

The protein localises to the cell membrane. This is an uncharacterized protein from Staphylococcus aureus (strain NCTC 8325 / PS 47).